Consider the following 519-residue polypeptide: MKKSTIWILGIIMGLSFLSLLYLQVSYIEEMVKMRKEQFNTSVRNALFQVSKDVEYDETQRWLLEDITEAERRALAQSSSTTEQKNGLIQQSERYRFKSPDGTLYSEFELKMITTEPSKVPKAMISERHGRNTIPQTSRSLTDAIKNRYMYQRFLLDDVALRMIYKASDKSIGERVNFKKLDNYLKSNFINNGVELLYHFSVIDKDGREVYRCSDYEDGGSEDSYTQPLFQNDPPAKMSIVKVHFPGKKDYIFDSVSFMIPSMIFTIVLLITFIFTIYIVFRQKKLTEMKNDFINNMTHEFKTPISTISLAAQMLKDPAVGKSPQMFQHISGVINDETKRLRFQVEKVLQMSMFDRQKATLKMKELDANELITGVINTFALKVERYNGKITSNLEATNPVIFADEMHITNVIFNLMDNAVKYKKPEEDLVLNVRTWNEPGKLMISIQDNGIGIKKENLKKVFDKFYRVHTGNLHDVKGFGLGLAYVKKIIQDHKGTIRAESELNVGTKFIIALPLLKND.

2 helical membrane-spanning segments follow: residues 5–25 and 260–280; these read TIWILGIIMGLSFLSLLYLQV and IPSMIFTIVLLITFIFTIYIV. Residues 296-517 enclose the Histidine kinase domain; that stretch reads NMTHEFKTPI…KFIIALPLLK (222 aa). His-299 carries the phosphohistidine; by autocatalysis modification.

Its subcellular location is the cell membrane. It catalyses the reaction ATP + protein L-histidine = ADP + protein N-phospho-L-histidine.. Its function is as follows. Member of the two-component regulatory system RprX/RprY. May activate RprY by phosphorylation. The protein is Sensor protein RprX (rprX) of Bacteroides fragilis (strain YCH46).